The primary structure comprises 100 residues: Large ribosomal subunit protein bL21 (100 aa).

The protein belongs to the bacterial ribosomal protein bL21 family. As to quaternary structure, part of the 50S ribosomal subunit. Contacts protein L20.

This protein binds to 23S rRNA in the presence of protein L20. This is Large ribosomal subunit protein bL21 from Mycoplasmoides gallisepticum (strain R(low / passage 15 / clone 2)) (Mycoplasma gallisepticum).